We begin with the raw amino-acid sequence, 464 residues long: ATP synthase subunit beta (464 aa).

153–160 (GGAGVGKT) is a binding site for ATP.

The protein belongs to the ATPase alpha/beta chains family. In terms of assembly, F-type ATPases have 2 components, CF(1) - the catalytic core - and CF(0) - the membrane proton channel. CF(1) has five subunits: alpha(3), beta(3), gamma(1), delta(1), epsilon(1). CF(0) has three main subunits: a(1), b(2) and c(9-12). The alpha and beta chains form an alternating ring which encloses part of the gamma chain. CF(1) is attached to CF(0) by a central stalk formed by the gamma and epsilon chains, while a peripheral stalk is formed by the delta and b chains.

It is found in the cell inner membrane. It carries out the reaction ATP + H2O + 4 H(+)(in) = ADP + phosphate + 5 H(+)(out). Produces ATP from ADP in the presence of a proton gradient across the membrane. The catalytic sites are hosted primarily by the beta subunits. The sequence is that of ATP synthase subunit beta from Burkholderia ambifaria (strain ATCC BAA-244 / DSM 16087 / CCUG 44356 / LMG 19182 / AMMD) (Burkholderia cepacia (strain AMMD)).